The sequence spans 135 residues: 6-pyruvoyl tetrahydrobiopterin synthase (135 aa).

Position 17 (H17) interacts with Zn(2+). C36 functions as the Proton acceptor in the catalytic mechanism. Residues H40 and H42 each coordinate Zn(2+). Residues H81 and E124 each act as charge relay system in the active site.

The protein belongs to the PTPS family. As to quaternary structure, homohexamer formed of two homotrimers in a head to head fashion. Zn(2+) is required as a cofactor.

The enzyme catalyses 7,8-dihydroneopterin 3'-triphosphate = 6-pyruvoyl-5,6,7,8-tetrahydropterin + triphosphate + H(+). It functions in the pathway cofactor biosynthesis; tetrahydrobiopterin biosynthesis; tetrahydrobiopterin from 7,8-dihydroneopterin triphosphate: step 1/3. Functionally, involved in the biosynthesis of tetrahydrobiopterin, an essential cofactor of aromatic amino acid hydroxylases. Catalyzes the transformation of 7,8-dihydroneopterin triphosphate into 6-pyruvoyl tetrahydropterin. The protein is 6-pyruvoyl tetrahydrobiopterin synthase (ptsA) of Dictyostelium discoideum (Social amoeba).